A 258-amino-acid chain; its full sequence is Large ribosomal subunit protein eL8z (258 aa).

A disordered region spans residues 1–20; it reads MAPKRGGRAPVPAKKKTEKV.

The protein belongs to the eukaryotic ribosomal protein eL8 family.

The chain is Large ribosomal subunit protein eL8z (RPL7A-1) from Oryza sativa subsp. japonica (Rice).